A 410-amino-acid chain; its full sequence is Serine/threonine transporter SstT (410 aa).

The next 10 helical transmembrane spans lie at 15–35 (GSLVTQIMVGLVAGIALAWLS), 49–69 (FVNALKAVAPLLVLVLVISSI), 82–102 (PIVMLYLLSTFFAAVVAVVAS), 118–138 (IVPPSGILEVLHGLLMSMVTN), 142–162 (AVMKANYIGILVWAIGLGFAF), 190–210 (FAPVGIFGLVASILASTGFDA), 217–237 (LLGLLLGCMLLMALVFNPLLV), 299–319 (MAGASITITVLTLAAVHTLGI), 331–351 (LVASVCACGASGVAGGSLLLI), and 358–378 (FGIPNEIAMQVVAVGFIIGVL).

This sequence belongs to the dicarboxylate/amino acid:cation symporter (DAACS) (TC 2.A.23) family.

The protein resides in the cell inner membrane. It catalyses the reaction L-serine(in) + Na(+)(in) = L-serine(out) + Na(+)(out). The enzyme catalyses L-threonine(in) + Na(+)(in) = L-threonine(out) + Na(+)(out). Involved in the import of serine and threonine into the cell, with the concomitant import of sodium (symport system). This chain is Serine/threonine transporter SstT, found in Erwinia tasmaniensis (strain DSM 17950 / CFBP 7177 / CIP 109463 / NCPPB 4357 / Et1/99).